The chain runs to 617 residues: Neopullulanase SusA (617 aa).

A signal peptide spans 1–22 (MKRNLLFIILLLLLPGLHQVFA). Residues Asn138, Asn143, Asp144, Gly164, and Asp166 each contribute to the Ca(2+) site. Residues Asp331 and Glu360 contribute to the active site.

The protein belongs to the glycosyl hydrolase 13 family. The cofactor is Ca(2+).

Its subcellular location is the periplasm. The enzyme catalyses Hydrolysis of pullulan to panose (6-alpha-D-glucosylmaltose).. It functions in the pathway glycan degradation; starch degradation. In terms of biological role, neopullulanase that cleaves 1,4-alpha-glucosidic linkages in starch to produce disaccharides or trisaccharides in starch degradation. This Bacteroides thetaiotaomicron (strain ATCC 29148 / DSM 2079 / JCM 5827 / CCUG 10774 / NCTC 10582 / VPI-5482 / E50) protein is Neopullulanase SusA (susA).